The sequence spans 415 residues: MAQANLSEILFKPKFKHPETSTLVRRTHCNHVVNIHSALDGDTANHWYRMINRLMWTWRGIDPLEIEEVLSRIACSKAEHSNNELLDTVVGYRNGNWIYEWANQGMMWQQKAMEETDPGSAGQFWLNAANLYSIASYPHLKGDELSEQAEVLSNRAYEEAAKYLPYTLKELTFPISDGGSLSGFLHMPTVGSAPFPTVLMCGGLDTLQSDYHRLFRDYLEPKGIAMLTIDLPSVGASSRWKLTQDTSYLHQQVLQALADVPWVDHQRVSVFGFRFGANVAVRLGYLEPQRVRAVACLGPIVHHLLCNSDSLRKVPDMYMDVMASRLGMADSTDETLNTEMNRYSLKTQGLLGRRCQTPMLAGFWENDPFSPKEEAKLICSSSADGKLLAIPSKPLYENFHRALLQTSEWLEDKMR.

Belongs to the FrsA family.

It catalyses the reaction a carboxylic ester + H2O = an alcohol + a carboxylate + H(+). In terms of biological role, catalyzes the hydrolysis of esters. In Yersinia pseudotuberculosis serotype O:1b (strain IP 31758), this protein is Esterase FrsA.